We begin with the raw amino-acid sequence, 440 residues long: Chromosome partition protein MukF (440 aa).

The interval 208–236 is leucine-zipper; it reads LSETSGTLRELQDTLEAAGDKLQANLLRI.

Belongs to the MukF family. As to quaternary structure, interacts, and probably forms a ternary complex, with MukE and MukB via its C-terminal region. The complex formation is stimulated by calcium or magnesium. It is required for an interaction between MukE and MukB.

It is found in the cytoplasm. It localises to the nucleoid. Its function is as follows. Involved in chromosome condensation, segregation and cell cycle progression. May participate in facilitating chromosome segregation by condensation DNA from both sides of a centrally located replisome during cell division. Not required for mini-F plasmid partitioning. Probably acts via its interaction with MukB and MukE. Overexpression results in anucleate cells. It has a calcium binding activity. This chain is Chromosome partition protein MukF, found in Serratia proteamaculans (strain 568).